The sequence spans 116 residues: Large ribosomal subunit protein bL19 (116 aa).

Belongs to the bacterial ribosomal protein bL19 family.

Its function is as follows. This protein is located at the 30S-50S ribosomal subunit interface and may play a role in the structure and function of the aminoacyl-tRNA binding site. The polypeptide is Large ribosomal subunit protein bL19 (Roseiflexus castenholzii (strain DSM 13941 / HLO8)).